The chain runs to 96 residues: Accessory cholera enterotoxin (96 aa).

The chain crosses the membrane as a helical span at residues 76-96 (QALAIVLQALMTRFALRALNL).

The protein resides in the secreted. Its subcellular location is the host cell membrane. In terms of biological role, increases short-circuit current in rabbit ileal tissue mounted in Ussing chambers, by increasing the potential difference. Cultures of V.cholerae containing the cloned ace gene cause fluid secretion in ligated rabbit ileal loops. This is Accessory cholera enterotoxin (ace) from Vibrio cholerae serotype O1 (strain ATCC 39315 / El Tor Inaba N16961).